The chain runs to 502 residues: Ribose import ATP-binding protein RbsA (502 aa).

ABC transporter domains lie at 6 to 242 and 253 to 496; these read IDMT…IARD and ALGA…SGAR. Residue 38-45 participates in ATP binding; it reads GQNGAGKS.

Belongs to the ABC transporter superfamily. Ribose importer (TC 3.A.1.2.1) family. The complex is composed of an ATP-binding protein (RbsA), two transmembrane proteins (RbsC) and a solute-binding protein (RbsB).

The protein resides in the cell inner membrane. It catalyses the reaction D-ribose(out) + ATP + H2O = D-ribose(in) + ADP + phosphate + H(+). Functionally, part of the ABC transporter complex RbsABC involved in ribose import. Responsible for energy coupling to the transport system. This is Ribose import ATP-binding protein RbsA from Cereibacter sphaeroides (strain ATCC 17023 / DSM 158 / JCM 6121 / CCUG 31486 / LMG 2827 / NBRC 12203 / NCIMB 8253 / ATH 2.4.1.) (Rhodobacter sphaeroides).